The chain runs to 624 residues: LRR receptor kinase BAK1 (624 aa).

Residues 1–25 (MAAPRWAVWAVLLLRLLVPAARVLA) form the signal peptide. Topologically, residues 26 to 237 (NMEGDALHSL…QSPGSSSSTG (212 aa)) are extracellular. LRR repeat units follow at residues 91 to 115 (LKNL…LGNL), 117 to 139 (NLVS…LGNL), 140 to 163 (LKLR…LTAI), and 164 to 188 (TALQ…SFSL). 5 N-linked (GlcNAc...) asparagine glycosylation sites follow: Asn103, Asn114, Asn127, Asn149, and Asn175. The disordered stretch occupies residues 205-236 (TTKPCPGAPPFSPPPPYNPPTPVQSPGSSSST). Positions 210–227 (PGAPPFSPPPPYNPPTPV) are enriched in pro residues. A helical transmembrane segment spans residues 238 to 258 (AIAGGVAAGAALLFAIPAIGF). The Cytoplasmic segment spans residues 259–624 (AWYRRRKPQE…LHAVELSGPR (366 aa)). Residues 301-588 (FSNKNILGRG…GLAERWEEWQ (288 aa)) form the Protein kinase domain. ATP is bound by residues 307 to 315 (LGRGGFGKV) and Lys329. Asp428 functions as the Proton acceptor in the catalytic mechanism.

The protein belongs to the protein kinase superfamily. Ser/Thr protein kinase family. Forms homodimers. Interacts with BRI1. Interacts with REM4.1.

The protein resides in the cell membrane. It catalyses the reaction L-seryl-[protein] + ATP = O-phospho-L-seryl-[protein] + ADP + H(+). The enzyme catalyses L-threonyl-[protein] + ATP = O-phospho-L-threonyl-[protein] + ADP + H(+). Functionally, LRR receptor kinase involved in defense response. Does not seem to be required specifically for XA21-mediated immunity or basal resistance to Xanthomonas oryzae pv. oryzae (Xoo), or immunity to Magnaporthe oryzae. Involved in brassinosteroid (BR) signaling pathway. Acts as a coreceptor of BRI1. Forms at the plasma membrane a receptor complex with BRI1 which is activated in response to brassinolide. Phosphorylates BRI1. Required for normal plant growth and leaf development. Possesses kinase activity in vitro. This chain is LRR receptor kinase BAK1, found in Oryza sativa subsp. indica (Rice).